Consider the following 1213-residue polypeptide: DNA-directed RNA polymerase subunit beta' (1213 aa).

Zn(2+) contacts are provided by cysteine 60, cysteine 62, cysteine 75, and cysteine 78. Residues aspartate 450, aspartate 452, and aspartate 454 each coordinate Mg(2+). 4 residues coordinate Zn(2+): cysteine 819, cysteine 893, cysteine 900, and cysteine 903.

Belongs to the RNA polymerase beta' chain family. In terms of assembly, the RNAP catalytic core consists of 2 alpha, 1 beta, 1 beta' and 1 omega subunit. When a sigma factor is associated with the core the holoenzyme is formed, which can initiate transcription. The cofactor is Mg(2+). Requires Zn(2+) as cofactor.

The catalysed reaction is RNA(n) + a ribonucleoside 5'-triphosphate = RNA(n+1) + diphosphate. In terms of biological role, DNA-dependent RNA polymerase catalyzes the transcription of DNA into RNA using the four ribonucleoside triphosphates as substrates. The protein is DNA-directed RNA polymerase subunit beta' of Streptococcus pyogenes serotype M18 (strain MGAS8232).